Here is an 805-residue protein sequence, read N- to C-terminus: MSGSFWLLLSFAALTAAQSTTEELAKTFLETFNYEAQELSYQSSVASWNYNTNITDENAKNMNEAGAKWSAYYEEQSKLAQTYPLAEIQDAKIKRQLQALQQSGSSVLSADKSQRLNTILNAMSTIYSTGKACNPNNPQECLLLEPGLDNIMENSKDYNERLWAWEGWRAEVGKQLRPLYEEYVALKNEMARANNYEDYGDYWRGDYEEEWTGGYNYSRNQLIQDVEDTFEQIKPLYQHLHAYVRAKLMDTYPSRISRTGCLPAHLLGDMWGRFWTNLYPLTVPFGQKPNIDVTDAMVNQNWDARRIFKEAEKFFVSVGLPNMTQGFWENSMLTEPGDGRKVVCHPTAWDLGKGDFRIKMCTKVTMDDFLTAHHEMGHIQYDMAYAAQPFLLRNGANEGFHEAVGEIMSLSAATPNHLKTIGLLSPAFSEDNETEINFLLKQALTIVGTLPFTYMLEKWRWMVFKGAIPKEQWMQKWWEMKRNIVGVVEPVPHDETYCDPASLFHVANDYSFIRYYTRTIYQFQFQEALCQIAKHEGPLHKCDISNSTEAGKKLLEMLSLGRSEPWTLALERVVGAKNMNVTPLLNYFEPLFTWLKEQNRNSFVGWDTDWRPYSDQSIKVRISLKSALGEKAYEWNDNEMYLFRSSIAYAMREYFSKVKNQTIPFVEDNVWVSDLKPRISFNFFVTFSNNVSDVIPRSEVEDAIRMSRSRINDAFRLDDNSLEFLGIEPTLSPPYRPPVTIWLIVFGVVMGAIVVGIVLLIVSGIRNRRKNDQAGSEENPYASVDLNKGENNPGFQHADDVQTSF.

An N-terminal signal peptide occupies residues 1–17 (MSGSFWLLLSFAALTAA). Over 18 to 740 (QSTTEELAKT…LSPPYRPPVT (723 aa)) the chain is Extracellular. The region spanning 19–607 (STTEELAKTF…QNRNSFVGWD (589 aa)) is the Peptidase M2 domain. An interaction with SARS S protein region spans residues 30 to 41 (ETFNYEAQELSY). N-linked (GlcNAc...) asparagine glycosylation is present at N53. 2 interaction with SARS S protein regions span residues 82-84 (TYP) and 90-93 (DAKI). An intrachain disulfide couples C133 to C141. R169 serves as a coordination point for chloride. Residue N216 is glycosylated (N-linked (GlcNAc...) asparagine). R273 contributes to the substrate binding site. N-linked (GlcNAc...) asparagine glycosylation occurs at N322. A disulfide bridge connects residues C344 and C361. 345-346 (HP) is a substrate binding site. Residues 353–357 (KGDFR) form an interaction with SARS S protein region. H374 contacts Zn(2+). Residue E375 is the Proton acceptor of the active site. 2 residues coordinate Zn(2+): H378 and E402. Chloride contacts are provided by W477 and K481. The active-site Proton donor is the H505. Y515 serves as a coordination point for substrate. An intrachain disulfide couples C530 to C542. N546 carries N-linked (GlcNAc...) asparagine glycosylation. One can recognise a Collectrin-like domain in the interval 614–805 (SDQSIKVRIS…QHADDVQTSF (192 aa)). The interval 652 to 659 (REYFSKVK) is essential for cleavage by ADAM17. N-linked (GlcNAc...) asparagine glycosylation is found at N660 and N690. The interval 697–716 (RSEVEDAIRMSRSRINDAFR) is essential for cleavage by TMPRSS11D and TMPRSS2. A helical transmembrane segment spans residues 741 to 761 (IWLIVFGVVMGAIVVGIVLLI). The Cytoplasmic segment spans residues 762–805 (VSGIRNRRKNDQAGSEENPYASVDLNKGENNPGFQHADDVQTSF). The interval 771–805 (NDQAGSEENPYASVDLNKGENNPGFQHADDVQTSF) is disordered. The short motif at 778–786 (ENPYASVDL) is the LIR element. At Y781 the chain carries Phosphotyrosine. The Endocytic sorting signal motif lies at 781–784 (YASV). Positions 781-785 (YASVD) match the SH2-binding motif. At S783 the chain carries Phosphoserine. The PTB signature appears at 792–795 (NPGF). The short motif at 803-805 (TSF) is the PDZ-binding element.

Belongs to the peptidase M2 family. In terms of assembly, homodimer. Interacts with the catalytically active form of TMPRSS2. Interacts with SLC6A19; this interaction is essential for expression and function of SLC6A19 in intestine. Interacts with ITGA5:ITGB1. Probably interacts (via endocytic sorting signal motif) with AP2M1; the interaction is inhibited by phosphorylation of Tyr-781. Interacts (via PDZ-binding motif) with NHERF1 (via PDZ domains); the interaction may enhance ACE2 membrane residence. (Microbial infection) Interacts with SARS-CoV S protein. Zn(2+) serves as cofactor. The cofactor is chloride. Proteolytic cleavage by ADAM17 generates a secreted form. Also cleaved by serine proteases: TMPRSS2, TMPRSS11D and HPN/TMPRSS1. Post-translationally, phosphorylated. Phosphorylation at Tyr-781 probably inhibits interaction with AP2M1 and enables interactions with proteins containing SH2 domains.

The protein resides in the secreted. It is found in the cell membrane. It localises to the cytoplasm. The protein localises to the cell projection. Its subcellular location is the cilium. The protein resides in the apical cell membrane. It carries out the reaction angiotensin II + H2O = angiotensin-(1-7) + L-phenylalanine. The enzyme catalyses angiotensin I + H2O = angiotensin-(1-9) + L-leucine. Essential counter-regulatory carboxypeptidase of the renin-angiotensin hormone system that is a critical regulator of blood volume, systemic vascular resistance, and thus cardiovascular homeostasis. Converts angiotensin I to angiotensin 1-9, a nine-amino acid peptide with anti-hypertrophic effects in cardiomyocytes, and angiotensin II to angiotensin 1-7, which then acts as a beneficial vasodilator and anti-proliferation agent, counterbalancing the actions of the vasoconstrictor angiotensin II. Also removes the C-terminal residue from three other vasoactive peptides, neurotensin, kinetensin, and des-Arg bradykinin, but is not active on bradykinin. Also cleaves other biological peptides, such as apelins, casomorphins and dynorphin A. Plays an important role in amino acid transport by acting as binding partner of amino acid transporter SLC6A19 in intestine, regulating trafficking, expression on the cell surface, and its catalytic activity. Functionally, (Microbial infection) Acts as a receptor for human coronavirus SARS. The sequence is that of Angiotensin-converting enzyme 2 (ACE2) from Paguma larvata (Masked palm civet).